The primary structure comprises 2386 residues: Protein kinase rad3 (2386 aa).

An FAT domain is found at 1386–1943 (TLGIVSLNCG…LWQLMATIKS (558 aa)). One can recognise a PI3K/PI4K catalytic domain in the interval 2052-2370 (FEDEVDIMNS…QIQELIKSAV (319 aa)). Residues 2058–2064 (IMNSLQK) form a G-loop region. Positions 2227-2235 (GLGDRHGEN) are catalytic loop. The segment at 2247-2271 (HVDFNCLFDKGLTFEKPEKVPFRLT) is activation loop. The 33-residue stretch at 2354–2386 (IPLSIEGQIQELIKSAVNPKNLVEMYIGWAAYF) folds into the FATC domain.

The protein belongs to the PI3/PI4-kinase family. ATM subfamily. Interacts with crb2 (via BRCT domain). Interacts with chk1.

Its subcellular location is the nucleus. It catalyses the reaction L-seryl-[protein] + ATP = O-phospho-L-seryl-[protein] + ADP + H(+). The catalysed reaction is L-threonyl-[protein] + ATP = O-phospho-L-threonyl-[protein] + ADP + H(+). Its function is as follows. Serine/threonine kinase which activates checkpoint signaling upon genotoxic stresses. Involved in G2 arrest following DNA damage where it phosphorylates chk1. Phosphorylation of 'Thr-73' and 'Ser-80' of checkpoint mediator crb2 promotes its interaction with chk1. It is also involved in the dependence of mitosis on the completion of DNA replication. The polypeptide is Protein kinase rad3 (rad3) (Schizosaccharomyces pombe (strain 972 / ATCC 24843) (Fission yeast)).